Reading from the N-terminus, the 557-residue chain is Dihydroxy-acid dehydratase (557 aa).

Position 49 (cysteine 49) interacts with [2Fe-2S] cluster. Aspartate 81 contributes to the Mg(2+) binding site. A [2Fe-2S] cluster-binding site is contributed by cysteine 122. Residues aspartate 123 and lysine 124 each coordinate Mg(2+). An N6-carboxylysine modification is found at lysine 124. Position 194 (cysteine 194) interacts with [2Fe-2S] cluster. Glutamate 446 serves as a coordination point for Mg(2+). Serine 472 functions as the Proton acceptor in the catalytic mechanism.

Belongs to the IlvD/Edd family. As to quaternary structure, homodimer. [2Fe-2S] cluster is required as a cofactor. The cofactor is Mg(2+).

It catalyses the reaction (2R)-2,3-dihydroxy-3-methylbutanoate = 3-methyl-2-oxobutanoate + H2O. It carries out the reaction (2R,3R)-2,3-dihydroxy-3-methylpentanoate = (S)-3-methyl-2-oxopentanoate + H2O. It participates in amino-acid biosynthesis; L-isoleucine biosynthesis; L-isoleucine from 2-oxobutanoate: step 3/4. It functions in the pathway amino-acid biosynthesis; L-valine biosynthesis; L-valine from pyruvate: step 3/4. In terms of biological role, functions in the biosynthesis of branched-chain amino acids. Catalyzes the dehydration of (2R,3R)-2,3-dihydroxy-3-methylpentanoate (2,3-dihydroxy-3-methylvalerate) into 2-oxo-3-methylpentanoate (2-oxo-3-methylvalerate) and of (2R)-2,3-dihydroxy-3-methylbutanoate (2,3-dihydroxyisovalerate) into 2-oxo-3-methylbutanoate (2-oxoisovalerate), the penultimate precursor to L-isoleucine and L-valine, respectively. The sequence is that of Dihydroxy-acid dehydratase from Prochlorococcus marinus (strain AS9601).